The following is a 465-amino-acid chain: Sensor histidine kinase ZraS (465 aa).

Topologically, residues 1-14 (MRFMQRSKDSLAKW) are cytoplasmic. The chain crosses the membrane as a helical span at residues 15–35 (LSAILPVVIVGLVGLFAVTVI). The Periplasmic segment spans residues 36–201 (RDYGRASEAD…ATQSGEKRNT (166 aa)). The helical transmembrane segment at 202–222 (LIILFALATVLLASVLSFFWY) threads the bilayer. Topologically, residues 223 to 465 (RRYLRSRQLL…VNITRKDPQG (243 aa)) are cytoplasmic. Residues 251–458 (GVAHEIRNPL…TFTLWLPVNI (208 aa)) enclose the Histidine kinase domain. His-254 is subject to Phosphohistidine; by autocatalysis.

Post-translationally, autophosphorylated.

It localises to the cell inner membrane. It catalyses the reaction ATP + protein L-histidine = ADP + protein N-phospho-L-histidine.. Activity of the ZraS/ZraR two-component system is repressed by the zinc-bound form of ZraP, which probably interacts with the periplasmic region of ZraS. Its function is as follows. Part of the Zra signaling pathway, an envelope stress response (ESR) system composed of the periplasmic accessory protein ZraP, the histidine kinase ZraS and the transcriptional regulator ZraR. The ZraPSR system contributes to antibiotic resistance and is important for membrane integrity in the presence of membrane-targeting biocides. ZraS is a member of the two-component regulatory system ZraS/ZraR. Functions as a membrane-associated sensor kinase that phosphorylates ZraR in response to high concentrations of Zn(2+) or Pb(2+) in the medium. Binds one zinc molecule with high affinity via its periplasmic domain, inducing a conformational change that is transmitted to the histidine kinase domain and leads to the activation of ZraR. The system has no direct role in zinc or copper resistance. In Escherichia coli (strain K12), this protein is Sensor histidine kinase ZraS.